Reading from the N-terminus, the 166-residue chain is Transcriptional repressor NrdR (166 aa).

A zinc finger spans residues 3 to 34; it reads CPFCGHDDTQVKDSRSTEDGVAIRRRRVCSAC. In terms of domain architecture, ATP-cone spans 49 to 139; that stretch reads LSVTKADGRR…VYRDFREVEA (91 aa). A disordered region spans residues 146–166; sequence DMKPIPGETDTPSPDDSQETP.

Belongs to the NrdR family. Zn(2+) is required as a cofactor.

Functionally, negatively regulates transcription of bacterial ribonucleotide reductase nrd genes and operons by binding to NrdR-boxes. This chain is Transcriptional repressor NrdR, found in Gluconobacter oxydans (strain 621H) (Gluconobacter suboxydans).